A 371-amino-acid chain; its full sequence is Flagellar P-ring protein (371 aa).

Positions 1–21 (MSRSFFATVLGLALAAMTVMA) are cleaved as a signal peptide.

Belongs to the FlgI family. In terms of assembly, the basal body constitutes a major portion of the flagellar organelle and consists of four rings (L,P,S, and M) mounted on a central rod.

It localises to the periplasm. The protein localises to the bacterial flagellum basal body. Assembles around the rod to form the L-ring and probably protects the motor/basal body from shearing forces during rotation. The sequence is that of Flagellar P-ring protein from Caulobacter sp. (strain K31).